We begin with the raw amino-acid sequence, 353 residues long: Guanine nucleotide-binding protein alpha-3 subunit (353 aa).

Gly-2 is lipidated: N-myristoyl glycine. A lipid anchor (S-palmitoyl cysteine) is attached at Cys-4. One can recognise a G-alpha domain in the interval 32-353 (KVVKLLLLGA…IQANLQGCGL (322 aa)). Positions 35-48 (KLLLLGAGECGKST) are G1 motif. GTP contacts are provided by residues 40–47 (GAGECGKS), 176–182 (LLSRIKT), 201–205 (DVGGQ), 270–273 (NKKD), and Ala-326. Mg(2+) contacts are provided by Ser-47 and Thr-182. Positions 174-182 (DILLSRIKT) are G2 motif. The tract at residues 197 to 206 (FRVFDVGGQR) is G3 motif. The interval 266 to 273 (ILFLNKKD) is G4 motif. The segment at 324-329 (TCATDT) is G5 motif.

This sequence belongs to the G-alpha family. G(q) subfamily. G proteins are composed of 3 units; alpha, beta and gamma. The alpha chain contains the guanine nucleotide binding site.

In terms of biological role, guanine nucleotide-binding proteins (G proteins) are involved as modulators or transducers in various transmembrane signaling systems. Promotes transcription of 3',5'-cyclic phosphodiesterases pde-1 and pde-5, leading to reduced cGMP levels in sensory neurons. This causes suppression of insulin production and signaling which leads to increased daf-16 activity and contributes to increased adult lifespan and resistance to oxidative stress. In addition, by reducing cGMP levels, inhibits TGF-beta signaling pathways. Involved in behavioral response to P.aeruginosa by controlling the expression of daf-7, a member of the TGF-beta family, in ASJ sensory neurons. Plays a role in the avoidance response to the noxious chemical quinine in ASH sensory neurons. The polypeptide is Guanine nucleotide-binding protein alpha-3 subunit (Caenorhabditis elegans).